We begin with the raw amino-acid sequence, 278 residues long: 4-deoxy-L-threo-5-hexosulose-uronate ketol-isomerase (278 aa).

4 residues coordinate Zn(2+): His196, His198, Glu203, and His245.

The protein belongs to the KduI family. Zn(2+) is required as a cofactor.

The catalysed reaction is 5-dehydro-4-deoxy-D-glucuronate = 3-deoxy-D-glycero-2,5-hexodiulosonate. It functions in the pathway glycan metabolism; pectin degradation; 2-dehydro-3-deoxy-D-gluconate from pectin: step 4/5. Functionally, catalyzes the isomerization of 5-dehydro-4-deoxy-D-glucuronate to 3-deoxy-D-glycero-2,5-hexodiulosonate. The protein is 4-deoxy-L-threo-5-hexosulose-uronate ketol-isomerase of Salmonella dublin (strain CT_02021853).